We begin with the raw amino-acid sequence, 162 residues long: Lectin BRA-3 (162 aa).

The signal sequence occupies residues 1–24 (MQRSEIVQAVTLLVVVFAITTAEC). A C-type lectin domain is found at 25 to 152 (TCPGNLDWQE…NKNKNFLCKM (128 aa)). 3 disulfides stabilise this stretch: Cys-26-Cys-39, Cys-56-Cys-150, and Cys-125-Cys-142.

In terms of assembly, homotetramer; disulfide-linked. As to expression, coelemic fluid.

Its function is as follows. Sugar-binding protein which recognizes specific carbohydrate structures and agglutinates a variety of animal cells by binding to cell-surface glycoproteins and glycolipids. Calcium-dependent lectin. Invertebrate lectins may be involved in defense functions. This is Lectin BRA-3 from Megabalanus rosa (Acorn barnacle).